The chain runs to 220 residues: Gene 32 protein (220 aa).

Residues 184–205 form a disordered region; the sequence is NSAGGNGNAPGGGGAGAQVSAQ. Over residues 187–199 the composition is skewed to gly residues; that stretch reads GGNGNAPGGGGAG.

This is Gene 32 protein (32) from Mycobacterium (Mycobacteriophage L5).